Reading from the N-terminus, the 543-residue chain is Probable ubiquitin-conjugating enzyme E2 26 (543 aa).

Residues 1–21 (MEPDVVEIPPPPLIASGSRTR) form a disordered region. A UBC core domain is found at 271–431 (NWVKKVQADW…VFLLSLKTMV (161 aa)). Cysteine 357 acts as the Glycyl thioester intermediate in catalysis. Residues 514–543 (LAEKPEPPMSNANTENQSKKKTRKRSRSSR) form a disordered region. A compositionally biased stretch (basic residues) spans 532–543 (KKKTRKRSRSSR).

This sequence belongs to the ubiquitin-conjugating enzyme family.

It carries out the reaction S-ubiquitinyl-[E1 ubiquitin-activating enzyme]-L-cysteine + [E2 ubiquitin-conjugating enzyme]-L-cysteine = [E1 ubiquitin-activating enzyme]-L-cysteine + S-ubiquitinyl-[E2 ubiquitin-conjugating enzyme]-L-cysteine.. Its pathway is protein modification; protein ubiquitination. Accepts the ubiquitin from the E1 complex and catalyzes its covalent attachment to other proteins. The polypeptide is Probable ubiquitin-conjugating enzyme E2 26 (UBC26) (Arabidopsis thaliana (Mouse-ear cress)).